Reading from the N-terminus, the 545-residue chain is Chaperonin GroEL (545 aa).

ATP contacts are provided by residues 29-32, Lys50, 86-90, Gly413, and Asp495; these read TLGP and DGTTT.

It belongs to the chaperonin (HSP60) family. As to quaternary structure, forms a cylinder of 14 subunits composed of two heptameric rings stacked back-to-back. Interacts with the co-chaperonin GroES.

It localises to the cytoplasm. It carries out the reaction ATP + H2O + a folded polypeptide = ADP + phosphate + an unfolded polypeptide.. Together with its co-chaperonin GroES, plays an essential role in assisting protein folding. The GroEL-GroES system forms a nano-cage that allows encapsulation of the non-native substrate proteins and provides a physical environment optimized to promote and accelerate protein folding. This chain is Chaperonin GroEL, found in Borrelia garinii subsp. bavariensis (strain ATCC BAA-2496 / DSM 23469 / PBi) (Borreliella bavariensis).